The sequence spans 898 residues: Protein SOV1, mitochondrial (898 aa).

The N-terminal 31 residues, 1–31, are a transit peptide targeting the mitochondrion; the sequence is MFKYNRSLCSSALIAKSQIRFYRLKRAPLNY.

The protein localises to the mitochondrion. The protein is Protein SOV1, mitochondrial (SOV1) of Saccharomyces cerevisiae (strain ATCC 204508 / S288c) (Baker's yeast).